A 331-amino-acid chain; its full sequence is UDP-N-acetylenolpyruvoylglucosamine reductase (331 aa).

Residues 54–221 enclose the FAD-binding PCMH-type domain; the sequence is RVGGAAELYV…TQATFQLQPG (168 aa). The active site involves Arg200. Ser251 serves as the catalytic Proton donor. Residue Glu321 is part of the active site.

The protein belongs to the MurB family. It depends on FAD as a cofactor.

Its subcellular location is the cytoplasm. The enzyme catalyses UDP-N-acetyl-alpha-D-muramate + NADP(+) = UDP-N-acetyl-3-O-(1-carboxyvinyl)-alpha-D-glucosamine + NADPH + H(+). The protein operates within cell wall biogenesis; peptidoglycan biosynthesis. Its function is as follows. Cell wall formation. The polypeptide is UDP-N-acetylenolpyruvoylglucosamine reductase (Trichormus variabilis (strain ATCC 29413 / PCC 7937) (Anabaena variabilis)).